The sequence spans 612 residues: MGDKFSVPTNQSKERQPIVKKKKKKKRTNIYSYILIISFPVIDQFQMSESLNIQELTDNSSIIPIPTESTDVQDVTSVSNKDTTTTTTTTTTTTESTTRVRKSSPSPSANENDKKRLKKEFQPRQKIEYTPLVDENGQPIPKAPRKPKRKVAVMLGYCGTGYNGMQVQNDPNVKTIEKDIYDAMATAGAISAENAVDLKKSGFQRAARTDKGVHAAGNVISLKMIIEDPEIINKINDLLPKQIRIWGIQRTTKGFDCRKCCSSRIYEYLLPTFSLLPPKPKSVLSELVKEKKLENPDLFEDDQEGIDWWENVKSKILASGITQEQIDSITSSYDEQQQQQQQQQQQQADEEERDISELSFTKLIKQIKTIENQSRRSYRISSSRLQHFREVMKQYEGTHNFHNFTVGKPFKDTSANRFMIKTIVSDPFVIEGTEWISIKIHGQSFMLHQIRKMIAMAALVVRLSLPCGIINNFFQSTKINIPKAPALGLLLENPVFDGYNIKLTKSDYEPIDFTKFDKEMNEFKMKYIYDKIYAEESKENIFYGFFGYIDAYRGNKNEDGEPIQNGASIFDFLFNYTERVENTKNKDAKNTSKTEESKPEESKPEESKSEQS.

2 disordered regions span residues 1-21 (MGDK…IVKK) and 64-122 (PIPT…KEFQ). Residues 64–82 (PIPTESTDVQDVTSVSNKD) are compositionally biased toward polar residues. Low complexity predominate over residues 83 to 97 (TTTTTTTTTTTTEST). Residues 111–122 (ENDKKRLKKEFQ) are compositionally biased toward basic and acidic residues. Asp-210 serves as the catalytic Nucleophile. 2 disordered regions span residues 330-352 (TSSY…DEEE) and 583-612 (TKNK…SEQS). Residues 336–347 (QQQQQQQQQQQQ) show a composition bias toward low complexity.

The protein belongs to the tRNA pseudouridine synthase TruA family. It depends on Zn(2+) as a cofactor.

Its subcellular location is the nucleus. It carries out the reaction a uridine in tRNA = a pseudouridine in tRNA. It catalyses the reaction uridine in snRNA = pseudouridine in snRNA. The enzyme catalyses a uridine in mRNA = a pseudouridine in mRNA. Formation of pseudouridine at positions 27 and 28 in the anticodon stem and loop of transfer RNAs; at positions 34 and 36 of intron-containing precursor tRNA(Ile) and at position 35 in the intron-containing tRNA(Tyr). Catalyzes pseudouridylation at position 44 in U2 snRNA. Also catalyzes pseudouridylation of mRNAs. This is tRNA pseudouridine synthase 1 (PUS1) from Candida albicans (strain SC5314 / ATCC MYA-2876) (Yeast).